The primary structure comprises 160 residues: Ribosomal RNA large subunit methyltransferase H (160 aa).

S-adenosyl-L-methionine is bound by residues L76, G108, and 127-132; that span reads FGFMTW.

It belongs to the RNA methyltransferase RlmH family. Homodimer.

The protein resides in the cytoplasm. It catalyses the reaction pseudouridine(1915) in 23S rRNA + S-adenosyl-L-methionine = N(3)-methylpseudouridine(1915) in 23S rRNA + S-adenosyl-L-homocysteine + H(+). Functionally, specifically methylates the pseudouridine at position 1915 (m3Psi1915) in 23S rRNA. This chain is Ribosomal RNA large subunit methyltransferase H, found in Bartonella henselae (strain ATCC 49882 / DSM 28221 / CCUG 30454 / Houston 1) (Rochalimaea henselae).